The primary structure comprises 187 residues: Protein GrpE (187 aa).

Positions 1 to 15 (MKETKQEEMEVREDC) are enriched in basic and acidic residues. The tract at residues 1–40 (MKETKQEEMEVREDCESVDSNLEATVEEMESTKGTSEDLE) is disordered.

Belongs to the GrpE family. As to quaternary structure, homodimer.

It localises to the cytoplasm. In terms of biological role, participates actively in the response to hyperosmotic and heat shock by preventing the aggregation of stress-denatured proteins, in association with DnaK and GrpE. It is the nucleotide exchange factor for DnaK and may function as a thermosensor. Unfolded proteins bind initially to DnaJ; upon interaction with the DnaJ-bound protein, DnaK hydrolyzes its bound ATP, resulting in the formation of a stable complex. GrpE releases ADP from DnaK; ATP binding to DnaK triggers the release of the substrate protein, thus completing the reaction cycle. Several rounds of ATP-dependent interactions between DnaJ, DnaK and GrpE are required for fully efficient folding. The sequence is that of Protein GrpE from Alkaliphilus oremlandii (strain OhILAs) (Clostridium oremlandii (strain OhILAs)).